A 524-amino-acid chain; its full sequence is MEPMLLLILVAAVVLLFVRWAFVYGHRTSNMPKGPPTLPFIGNIHQIPTQYTHIKFTEWAAKYGGLYMLKVGNGNMAVVTDRRLVKEVVDRKSGIYSHRPHSFVSHELITKGNHLLVMHYGDQWRTFRRLIHQHLMESMVDSQHVKIVNAEAIQLVRDYLVDPEHHMAHPKRFSNSITNSIVFGIRTADRNGSNMKRLYKLMEEWSEIMETGATPPVDLFPWMKMLPQWMFSNYVNRAKAIGVQMETLYTDILNKVIKRRNGGQNLGTFMDRVLDGQEKNDLPWHQLAFIGGVLMEGGSDTSSSLTIAIVQALILNPAVQKKAHAEIDAVVGSDRSPVWEDLEKLPYINMIIKEGHRWRPILPLCFPHALGEDDWVDGKLLPKGTVVVINTWGMHMDPSQPDDPAAFIPERYANHPQLAPEYAAGKWENRDHYGYGVGRRICPGIHLAERNMFLAIAKLLWAFEFQRGEGKIDSDPVTGYHNGFLYCAKDYPCRPVVRNKTIRATIEREFATATKEVFSQFTEG.

The Cytoplasmic segment spans residues 1–4; the sequence is MEPM. Residues 5-23 traverse the membrane as a helical segment; the sequence is LLLILVAAVVLLFVRWAFV. Topologically, residues 24–524 are lumenal; the sequence is YGHRTSNMPK…KEVFSQFTEG (501 aa). An N-linked (GlcNAc...) asparagine glycan is attached at Asn-191. Position 442 (Cys-442) interacts with heme. An N-linked (GlcNAc...) asparagine glycan is attached at Asn-499.

This sequence belongs to the cytochrome P450 family. Heme is required as a cofactor.

It is found in the endoplasmic reticulum membrane. The catalysed reaction is 3-methylphenol + reduced [NADPH--hemoprotein reductase] + O2 = 3-hydroxybenzyl alcohol + oxidized [NADPH--hemoprotein reductase] + H2O + H(+). Its pathway is mycotoxin biosynthesis; patulin biosynthesis. In terms of biological role, cytochrome P450 monooxygenase; part of the gene cluster that mediates the biosynthesis of patulin, an acetate-derived tetraketide mycotoxin produced by several fungal species that shows antimicrobial properties against several bacteria. PatH catalyzes the conversion of m-cresol into m-hydroxybenzyl alcohol. The pathway begins with the synthesis of 6-methylsalicylic acid by the polyketide synthase (PKS) patK via condensation of acetate and malonate units. The 6-methylsalicylic acid decarboxylase patG then catalyzes the decarboxylation of 6-methylsalicylic acid to yield m-cresol (also known as 3-methylphenol). These first reactions occur in the cytosol. The intermediate m-cresol is then transported into the endoplasmic reticulum where the cytochrome P450 monooxygenase patH converts it to m-hydroxybenzyl alcohol, which is further converted to gentisyl alcohol by the cytochrome P450 monooxygenase patI. The oxidoreductases patJ and patO further convert gentisyl alcohol to isoepoxydon in the vacuole. PatN catalyzes then the transformation of isoepoxydon into phyllostine. The cluster protein patF is responsible for the conversion from phyllostine to neopatulin whereas the alcohol dehydrogenase patD converts neopatulin to E-ascladiol. The steps between isoepoxydon and E-ascladiol occur in the cytosol, and E-ascladiol is probably secreted to the extracellular space by one of the cluster-specific transporters patC or patM. Finally, the secreted patulin synthase patE catalyzes the conversion of E-ascladiol to patulin. The protein is Cytochrome P450 monooxygenase patH of Aspergillus clavatus (strain ATCC 1007 / CBS 513.65 / DSM 816 / NCTC 3887 / NRRL 1 / QM 1276 / 107).